The sequence spans 409 residues: Peptidase T (409 aa).

His-78 is a Zn(2+) binding site. The active site involves Asp-80. A Zn(2+)-binding site is contributed by Asp-140. The Proton acceptor role is filled by Glu-174. Zn(2+) is bound by residues Glu-175, Asp-197, and His-379.

This sequence belongs to the peptidase M20B family. The cofactor is Zn(2+).

It localises to the cytoplasm. The catalysed reaction is Release of the N-terminal residue from a tripeptide.. Cleaves the N-terminal amino acid of tripeptides. This chain is Peptidase T, found in Photobacterium profundum (strain SS9).